Reading from the N-terminus, the 375-residue chain is 23S rRNA (uracil(747)-C(5))-methyltransferase RlmC (375 aa).

The [4Fe-4S] cluster site is built by Cys-3, Cys-11, Cys-14, and Cys-87. 4 residues coordinate S-adenosyl-L-methionine: Gln-212, Phe-241, Glu-262, and Asn-307. Cys-334 serves as the catalytic Nucleophile.

This sequence belongs to the class I-like SAM-binding methyltransferase superfamily. RNA M5U methyltransferase family. RlmC subfamily.

It catalyses the reaction uridine(747) in 23S rRNA + S-adenosyl-L-methionine = 5-methyluridine(747) in 23S rRNA + S-adenosyl-L-homocysteine + H(+). Its function is as follows. Catalyzes the formation of 5-methyl-uridine at position 747 (m5U747) in 23S rRNA. This Escherichia coli O9:H4 (strain HS) protein is 23S rRNA (uracil(747)-C(5))-methyltransferase RlmC.